A 165-amino-acid polypeptide reads, in one-letter code: Group 10 secretory phospholipase A2 (165 aa).

A signal peptide spans 1-31 (MGPLPVCLPIMLLLLLPSLLLLLLLPGPGSG). A propeptide spanning residues 32–42 (EASRILRVHRR) is cleaved from the precursor. Intrachain disulfides connect Cys-53/Cys-111, Cys-67/Cys-157, Cys-69/Cys-85, Cys-84/Cys-139, Cys-90/Cys-164, Cys-91/Cys-132, Cys-100/Cys-125, and Cys-118/Cys-130. Ca(2+) is bound by residues Phe-68, Gly-70, and Gly-72. His-88 is an active-site residue. Asp-89 contacts Ca(2+). The N-linked (GlcNAc...) asparagine glycan is linked to Asn-113. Residue Asp-133 is part of the active site.

This sequence belongs to the phospholipase A2 family. Interacts with PLA2R1; this interaction mediates PLA2G10 clearance and inactivation. It depends on Ca(2+) as a cofactor. As to expression, found in spleen, thymus, peripheral blood leukocytes, pancreas, lung, and colon. Expressed in neuronal fibers in dorsal root ganglia and in peripheral tissues including stomach, white adipose tissue and prostate (at protein level).

It localises to the secreted. The protein localises to the lysosome. The protein resides in the cytoplasmic vesicle. It is found in the secretory vesicle. Its subcellular location is the acrosome. It carries out the reaction a 1,2-diacyl-sn-glycero-3-phosphocholine + H2O = a 1-acyl-sn-glycero-3-phosphocholine + a fatty acid + H(+). The enzyme catalyses 1-hexadecanoyl-2-(9Z-octadecenoyl)-sn-glycero-3-phosphocholine + H2O = 1-hexadecanoyl-sn-glycero-3-phosphocholine + (9Z)-octadecenoate + H(+). It catalyses the reaction 1-octadecanoyl-2-(5Z,8Z,11Z,14Z-eicosatetraenoyl)-sn-glycero-3-phosphocholine + H2O = 1-octadecanoyl-sn-glycero-3-phosphocholine + (5Z,8Z,11Z,14Z)-eicosatetraenoate + H(+). The catalysed reaction is 1,2-dihexadecanoyl-sn-glycero-3-phosphocholine + H2O = 1-hexadecanoyl-sn-glycero-3-phosphocholine + hexadecanoate + H(+). It carries out the reaction 1-hexadecanoyl-2-(9Z-octadecenoyl)-sn-glycero-3-phosphoglycerol + H2O = 1-hexadecanoyl-sn-glycero-3-phosphoglycerol + (9Z)-octadecenoate + H(+). The enzyme catalyses 1,2-dihexadecanoyl-sn-glycero-3-phospho-(1'-sn-glycerol) + H2O = 1-hexadecanoyl-sn-glycero-3-phospho-(1'-sn-glycerol) + hexadecanoate + H(+). It catalyses the reaction 1-hexadecanoyl-2-(9Z-octadecenoyl)-sn-glycero-3-phospho-L-serine + H2O = 1-hexadecanoyl-sn-glycero-3-phospho-L-serine + (9Z)-octadecenoate + H(+). The catalysed reaction is 1-hexadecanoyl-2-(9Z,12Z-octadecadienoyl)-sn-glycero-3-phosphoethanolamine + H2O = 1-hexadecanoyl-sn-glycero-3-phosphoethanolamine + (9Z,12Z)-octadecadienoate + H(+). It carries out the reaction 1-hexadecanoyl-2-(9Z-octadecenoyl)-sn-glycero-3-phosphate + H2O = 1-hexadecanoyl-sn-glycero-3-phosphate + (9Z)-octadecenoate + H(+). The enzyme catalyses 1-O-hexadecyl-2-acetyl-sn-glycero-3-phosphocholine + H2O = 1-O-hexadecyl-sn-glycero-3-phosphocholine + acetate + H(+). Its activity is regulated as follows. Inhibited by methyl indoxam. In terms of biological role, secretory calcium-dependent phospholipase A2 that primarily targets extracellular phospholipids. Hydrolyzes the ester bond of the fatty acyl group attached at sn-2 position of phospholipids with preference for phosphatidylcholines and phosphatidylglycerols over phosphatidylethanolamines. Preferentially releases sn-2 omega-6 and omega-3 polyunsaturated fatty acyl (PUFA) chains over saturated fatty acyls. Contributes to phospholipid remodeling of very low-density lipoprotein (VLDL), low-density lipoprotein (LDL) and high-density lipoprotein (HDL) particles. Hydrolyzes LDL phospholipids releasing unsaturated fatty acids that regulate macrophage differentiation toward foam cells. Efficiently hydrolyzes and inactivates platelet activating factor (PAF), a potent lipid mediator present in oxidized LDL. May act in an autocrine and paracrine manner. Secreted by lung epithelium, targets membrane phospholipids of infiltrating eosinophils, releasing arachidonate and boosting eicosanoid and cysteinyl leukotriene synthesis involved in airway inflammatory response. Secreted by gut epithelium, hydrolyzes dietary and biliary phosphatidylcholines in the gastrointestinal lumen. Plays a stem cell regulator role in colon epithelium. Within intracellular compartment, mediates Paneth-like cell differentiation and its stem cell supporting functions by inhibiting the Wnt signaling pathway in intestinal stem cell (ISC). Secreted in the intestinal lumen upon inflammation, acts in an autocrine way and promotes prostaglandin E2 synthesis that stimulates Wnt signaling pathway in ISCs and tissue regeneration. May participate in hair follicle morphogenesis by regulating phosphatidylethanolamines metabolism at the outermost epithelial layer and facilitating melanin synthesis. By releasing lysophosphatidylcholines (LPCs) at sperm acrosome, controls sperm cell capacitation, acrosome reaction and overall fertility. May promote neurite outgrowth in neuron fibers involved in nociception. Contributes to lipid remodeling of cellular membranes and generation of lipid mediators involved in pathogen clearance. Cleaves sn-2 fatty acyl chains of phosphatidylglycerols and phosphatidylethanolamines, which are major components of membrane phospholipids in bacteria. Displays bactericidal activity against Gram-positive bacteria by directly hydrolyzing phospholipids of the bacterial membrane. In pulmonary epithelium, may contribute to host defense response against adenoviral infection. Prevents adenovirus entry into host cells by hydrolyzing host cell plasma membrane, releasing C16:0 LPCs that inhibit virus-mediated membrane fusion and viral infection. Likely prevents adenoviral entry into the endosomes of host cells. May play a role in maturation and activation of innate immune cells including macrophages, group 2 innate lymphoid cells and mast cells. The sequence is that of Group 10 secretory phospholipase A2 (PLA2G10) from Homo sapiens (Human).